We begin with the raw amino-acid sequence, 253 residues long: Probable U3 small nucleolar RNA-associated protein 11 (253 aa).

Residues 1-21 (MAAAFRKAVKSRQREYRERSQ) are disordered. Glycyl lysine isopeptide (Lys-Gly) (interchain with G-Cter in SUMO2) cross-links involve residues K74, K83, and K86. A Phosphothreonine modification is found at T90. Residues K103, K120, K143, K144, K180, K211, K218, K235, and K236 each participate in a glycyl lysine isopeptide (Lys-Gly) (interchain with G-Cter in SUMO2) cross-link. Residue S241 is modified to Phosphoserine. K246 participates in a covalent cross-link: Glycyl lysine isopeptide (Lys-Gly) (interchain with G-Cter in SUMO2).

This sequence belongs to the UTP11 family. As to quaternary structure, part of the small subunit (SSU) processome, composed of more than 70 proteins and the RNA chaperone small nucleolar RNA (snoRNA) U3.

It is found in the nucleus. The protein resides in the nucleolus. Functionally, part of the small subunit (SSU) processome, first precursor of the small eukaryotic ribosomal subunit. During the assembly of the SSU processome in the nucleolus, many ribosome biogenesis factors, an RNA chaperone and ribosomal proteins associate with the nascent pre-rRNA and work in concert to generate RNA folding, modifications, rearrangements and cleavage as well as targeted degradation of pre-ribosomal RNA by the RNA exosome. Involved in nucleolar processing of pre-18S ribosomal RNA. The chain is Probable U3 small nucleolar RNA-associated protein 11 from Rattus norvegicus (Rat).